The following is a 501-amino-acid chain: DELTA-alicitoxin-Pse2a (501 aa).

An N-terminal signal peptide occupies residues 1–22 (MSPYFKLSSALIFLAITMEALC). Positions 23–35 (SPIENTSTSNKDN) are excised as a propeptide. The region spanning 23–359 (SPIENTSTSN…GFLHFGCSYL (337 aa)) is the MACPF domain. A coiled-coil region spans residues 135–159 (AAVTNNIASSEEEVQGLSLNLKAYS). The region spanning 388–422 (VCKVGPEGCQHHEDCHYRAAFWCECGGPYDLARTC) is the EGF-like domain. 3 disulfides stabilise this stretch: Cys389–Cys402, Cys396–Cys410, and Cys412–Cys422.

It is found in the secreted. The protein localises to the nematocyst. Its function is as follows. Causes lethal toxicity to the shrimp Palaemon paucidence, and hemolytic activity toward sheep red blood cells. In Phyllodiscus semoni (Night anemone), this protein is DELTA-alicitoxin-Pse2a.